Here is a 708-residue protein sequence, read N- to C-terminus: Meiotic sister-chromatid recombination protein 6, mitochondrial (708 aa).

A mitochondrion-targeting transit peptide spans 1 to 15; it reads MLSVRISARQCSVRG. Positions 19-36 are enriched in polar residues; that stretch reads QANNVSQPAKDNATNGSD. The tract at residues 19 to 44 is disordered; it reads QANNVSQPAKDNATNGSDAATEKKGT.

The protein resides in the mitochondrion. Its function is as follows. May be involved in the control of meiotic sister-chromatid recombination. This chain is Meiotic sister-chromatid recombination protein 6, mitochondrial (MSC6), found in Kluyveromyces lactis (strain ATCC 8585 / CBS 2359 / DSM 70799 / NBRC 1267 / NRRL Y-1140 / WM37) (Yeast).